The following is an 835-amino-acid chain: MGILNKIFGTYSERELRRVNPIVNKIEALDEKMQSLKDEDFKLKTEEFKSRLEKGEKLDDILPEAFALVREASHRTIGLKHYREQLIGGVVLHQGRIGEMKTGEGKTLVATLPAYVNALTGKGVHIVTVNDYLAKRDRDLMAPVYEFLGLKVGVILHNLNNEERQEAYGSDITYGTNSEFGFDYLRDNMVVYKEERVQRKLNFSIVDEVDSILIDEARTPLIISGQGEKSTEFYKVADYFTKSLIAEKDFTIDEKANSAMLTDEGVNKAENFFKVDNYADAENMEIQHHVVQALKANYVMKKDKDYMIKDGEILIVDEFTGRAMEGRRYSDGLHQAIEAKEGVRVERESKTLATITYQNYFRMYNKLSGMTGTAQTEENEFREIYGLDVIVIPTHEPIARIDNADVVYKSEKGKFKAIVDEIVERYKKGQPMLVGTVSIEKSEMLSSMLKKKGVPHQVLNAKYHEKEAEIISHAGEYGMVTIATNMAGRGTDIKLTKEAEEAGGLMIIGTERHESRRIDNQLRGRSGRQGDPGESRFFVSLEDDLMRIFGSERIQGIVDKLGLAEDEAIESKMVSSAIESAQKKVEGNNFDIRKTLLQYDDVINKQREIIYKQRSEVLEGEDLKDQIRDMIRDVAYTAVNSHVSGVEEEFETELQNLVNYLEDICLPKALVKVKDISNLSDEEIKEKLLEAVENIYSNKEKEIGEEQIREIERVILLRVVDTKWMDHIDDMDHLKQGIGLRAYRQQDPVQAYQFEGSEMFEEMIYNIKVDTVRYLFHVEVEKAPEREKVAKETSTNYDEDSVKKQPIKKENRIGRNDMCPCGSGKKYKNCCGRMA.

Residues Gln85, 103–107 (GEGKT), and Asp492 contribute to the ATP site. Cys819, Cys821, Cys830, and Cys831 together coordinate Zn(2+).

It belongs to the SecA family. Monomer and homodimer. Part of the essential Sec protein translocation apparatus which comprises SecA, SecYEG and auxiliary proteins SecDF. Other proteins may also be involved. Requires Zn(2+) as cofactor.

It is found in the cell membrane. It localises to the cytoplasm. It carries out the reaction ATP + H2O + cellular proteinSide 1 = ADP + phosphate + cellular proteinSide 2.. Functionally, part of the Sec protein translocase complex. Interacts with the SecYEG preprotein conducting channel. Has a central role in coupling the hydrolysis of ATP to the transfer of proteins into and across the cell membrane, serving as an ATP-driven molecular motor driving the stepwise translocation of polypeptide chains across the membrane. The polypeptide is Protein translocase subunit SecA (Clostridium botulinum (strain Loch Maree / Type A3)).